The sequence spans 942 residues: Isoleucine--tRNA ligase (942 aa).

Residues 58–68 carry the 'HIGH' region motif; the sequence is PYANGDIHIGH. E566 lines the L-isoleucyl-5'-AMP pocket. Residues 607-611 carry the 'KMSKS' region motif; sequence KMSKS. Residue K610 coordinates ATP. Zn(2+) contacts are provided by C905, C908, C925, and C928.

Belongs to the class-I aminoacyl-tRNA synthetase family. IleS type 1 subfamily. Monomer. It depends on Zn(2+) as a cofactor.

It is found in the cytoplasm. It catalyses the reaction tRNA(Ile) + L-isoleucine + ATP = L-isoleucyl-tRNA(Ile) + AMP + diphosphate. Functionally, catalyzes the attachment of isoleucine to tRNA(Ile). As IleRS can inadvertently accommodate and process structurally similar amino acids such as valine, to avoid such errors it has two additional distinct tRNA(Ile)-dependent editing activities. One activity is designated as 'pretransfer' editing and involves the hydrolysis of activated Val-AMP. The other activity is designated 'posttransfer' editing and involves deacylation of mischarged Val-tRNA(Ile). The chain is Isoleucine--tRNA ligase from Vibrio parahaemolyticus serotype O3:K6 (strain RIMD 2210633).